A 289-amino-acid polypeptide reads, in one-letter code: Glucanase inhibitor protein 2 (289 aa).

The signal sequence occupies residues 1–19 (MKVTATIAAASMAIAAASA). One can recognise a Peptidase S1 domain in the interval 29–257 (ILGGSIIPSG…ALKWVNPIIK (229 aa)). Residues cysteine 56 and cysteine 72 are joined by a disulfide bond. 3 N-linked (GlcNAc...) asparagine glycosylation sites follow: asparagine 89, asparagine 104, and asparagine 109. 2 cysteine pairs are disulfide-bonded: cysteine 180–cysteine 192 and cysteine 202–cysteine 233.

The protein belongs to the peptidase S1 family.

Its subcellular location is the secreted. Its function is as follows. Secreted effector that suppresses host plant glucan elicitor-mediated defense responses. Targets host endoglucanases and inhibits the endoglucanase-mediated release of elicitor-active glucan oligosaccharides from P.sojae cell walls. The protein is Glucanase inhibitor protein 2 of Phytophthora sojae (Soybean stem and root rot agent).